The sequence spans 428 residues: Trigger factor (428 aa).

The PPIase FKBP-type domain maps to Gly163–Pro248.

Belongs to the FKBP-type PPIase family. Tig subfamily.

Its subcellular location is the cytoplasm. It carries out the reaction [protein]-peptidylproline (omega=180) = [protein]-peptidylproline (omega=0). Functionally, involved in protein export. Acts as a chaperone by maintaining the newly synthesized protein in an open conformation. Functions as a peptidyl-prolyl cis-trans isomerase. This chain is Trigger factor, found in Ruminiclostridium cellulolyticum (strain ATCC 35319 / DSM 5812 / JCM 6584 / H10) (Clostridium cellulolyticum).